Here is a 249-residue protein sequence, read N- to C-terminus: Type III pantothenate kinase (249 aa).

Residue 6 to 13 (DCGNSFIK) participates in ATP binding. Substrate contacts are provided by residues tyrosine 93 and 100-103 (GMDR). Aspartate 102 acts as the Proton acceptor in catalysis. Residue aspartate 122 participates in K(+) binding. An ATP-binding site is contributed by threonine 125. Threonine 181 provides a ligand contact to substrate.

Belongs to the type III pantothenate kinase family. As to quaternary structure, homodimer. NH4(+) serves as cofactor. It depends on K(+) as a cofactor.

The protein resides in the cytoplasm. It carries out the reaction (R)-pantothenate + ATP = (R)-4'-phosphopantothenate + ADP + H(+). The protein operates within cofactor biosynthesis; coenzyme A biosynthesis; CoA from (R)-pantothenate: step 1/5. Its function is as follows. Catalyzes the phosphorylation of pantothenate (Pan), the first step in CoA biosynthesis. This chain is Type III pantothenate kinase, found in Pseudomonas putida (strain ATCC 47054 / DSM 6125 / CFBP 8728 / NCIMB 11950 / KT2440).